Reading from the N-terminus, the 1169-residue chain is MSHIEQEERKRFFNDDLDTSETSLNFKSENKESFLFANSHNDDDDDVVVSVSDTTEGEGDRSIVPVRREIEEEGQNQFITELLRIIPEMPKDLVMELNEKFGSQEEGLSLALSHYFDHNSGTSISKIPSSPNQLNTLSDTSNSTLSPSSFHPKRRRIYGFRNQTRLEDKVTWKRFIGALQVTGMATRPTVRPLKYGSQMKLKRSSEEISATKVYDSRGRKKASMASLVRIFDIQYDREIGRVSEDIAQILYPLLSSHEISFEVTLIFCDNKRLSIGDSFILQLDCFLTSLIFEERNDGESLMKRRRTEGGNKREKDNGNFGRTLTETDEELESRSKRLALLKLFDKLRLKPILDEQKALEKHKIELNSDPEIIDLDNDEICSNQVTEVHNNLRDTQHEEETMNLNQLKTFYKAAQSSESLKSLPETEPSRDVFKLELRNYQKQGLTWMLRREQEFAKAASDGEASETGANMINPLWKQFKWPNDMSWAAQNLQQDHVNVEDGIFFYANLHSGEFSLAKPILKTMIKGGILSDEMGLGKTVAAYSLVLSCPHDSDVVDKKLFDIENTAVSDNLPSTWQDNKKPYASKTTLIVVPMSLLTQWSNEFTKANNSPDMYHEVYYGGNVSSLKTLLTKTKTPPTVVLTTYGIVQNEWTKHSKGRMTDEDVNISSGLFSVNFYRIIIDEGHNIRNRTTVTSKAVMALQGKCKWVLTGTPIINRLDDLYSLVKFLELDPWRQINYWKTFVSTPFESKNYKQAFDVVNAILEPVLLRRTKQMKDKDGKPLVELPPKEVVIKRLPFSKSQDLLYKFLLDKAEVSVKSGIARGDLLKKYSTILVHILRLRQVCCHPGLIGSQDENDEDLSKNNKLVTEQTVELDSLMRVVSERFDNSFSKEELDAMIQRLKVKYPDNKSFQSLECSICTTEPMDLDKALFTECGHSFCEKCLFEYIEFQNSKNLGLKCPNCRNQIDACRLLALVQTNSNSKNLEFKPYSPASKSSKITALLKELQLLQDSSAGEQVVIFSQFSTYLDILEKELTHTFSKDVAKIYKFDGRLSLKERTSVLADFAVKDYSRQKILLLSLKAGGVGLNLTCASHAYMMDPWWSPSMEDQAIDRLHRIGQTNSVKVMRFIIQDSIEEKMLRIQEKKRTIGEAMDTDEDERRKRRIEEIQMLFE.

At Ser2 the chain carries N-acetylserine. Residues Ser20, Ser23, Ser129, and Ser130 each carry the phosphoserine modification. Basic and acidic residues predominate over residues 302-317 (MKRRRTEGGNKREKDN). A disordered region spans residues 302–327 (MKRRRTEGGNKREKDNGNFGRTLTET). Residues 519 to 730 (PILKTMIKGG…YSLVKFLELD (212 aa)) form the Helicase ATP-binding domain. ATP is bound at residue 532 to 539 (DEMGLGKT). Positions 681–684 (DEGH) match the DEGH box motif. Residues 914–961 (CSICTTEPMDLDKALFTECGHSFCEKCLFEYIEFQNSKNLGLKCPNCR) form an RING-type zinc finger. Residues 995 to 1165 (KITALLKELQ…RRKRRIEEIQ (171 aa)) enclose the Helicase C-terminal domain.

Belongs to the SNF2/RAD54 helicase family. As to quaternary structure, homodimer. Interacts with POL30, RAD18, UBC9 and UBC13. The cofactor is Mg(2+). Mn(2+) is required as a cofactor. Requires Ca(2+) as cofactor.

The protein resides in the cytoplasm. The protein localises to the nucleus. Probable helicase, member of the UBC2/RAD6 epistasis group. Functions with the DNA repair protein RAD18 in error-free postreplication DNA repair. Involved in the maintenance of wild-type rates of instability of simple repetitive sequences such as poly(GT) repeats. Seems to be involved in maintaining a balance which acts in favor of error-prone non-homologous joining during DNA double-strand breaks repairs. Recruits the UBC13-MMS2 dimer to chromatin for DNA repair. The sequence is that of DNA repair protein RAD5 (RAD5) from Saccharomyces cerevisiae (strain ATCC 204508 / S288c) (Baker's yeast).